Here is a 503-residue protein sequence, read N- to C-terminus: Cytochrome P450 3A17 (503 aa).

Cys-442 contributes to the heme binding site.

This sequence belongs to the cytochrome P450 family. Heme is required as a cofactor.

It is found in the endoplasmic reticulum membrane. Its subcellular location is the microsome membrane. It catalyses the reaction an organic molecule + reduced [NADPH--hemoprotein reductase] + O2 = an alcohol + oxidized [NADPH--hemoprotein reductase] + H2O + H(+). Functionally, cytochromes P450 are a group of heme-thiolate monooxygenases. In liver microsomes, this enzyme is involved in an NADPH-dependent electron transport pathway. It oxidizes a variety of structurally unrelated compounds, including steroids, fatty acids, and xenobiotics. The polypeptide is Cytochrome P450 3A17 (CYP3A17) (Cavia porcellus (Guinea pig)).